The primary structure comprises 129 residues: Small ribosomal subunit protein uS13 (129 aa).

The tract at residues 96–129 (GLPVRGQRTSTNARTRKGPRKTVGVSKAAAAAKA) is disordered.

This sequence belongs to the universal ribosomal protein uS13 family. In terms of assembly, part of the 30S ribosomal subunit. Forms a loose heterodimer with protein S19. Forms two bridges to the 50S subunit in the 70S ribosome.

Located at the top of the head of the 30S subunit, it contacts several helices of the 16S rRNA. In the 70S ribosome it contacts the 23S rRNA (bridge B1a) and protein L5 of the 50S subunit (bridge B1b), connecting the 2 subunits; these bridges are implicated in subunit movement. Contacts the tRNAs in the A and P-sites. This Opitutus terrae (strain DSM 11246 / JCM 15787 / PB90-1) protein is Small ribosomal subunit protein uS13.